Here is a 488-residue protein sequence, read N- to C-terminus: G-patch domain and KOW motifs-containing protein (488 aa).

Pro residues predominate over residues 1–11; that stretch reads MAGRESPPPSA. A disordered region spans residues 1–20; that stretch reads MAGRESPPPSAPSMAPISFG. The residue at position 2 (Ala2) is an N-acetylalanine. Ser25 carries the post-translational modification Phosphoserine; by PKA. Residues 72–97 form a disordered region; it reads IQNGSRRQPLSKNPKPSSETSTVLMS. Positions 73 to 95 are enriched in polar residues; that stretch reads QNGSRRQPLSKNPKPSSETSTVL. Ser115 is subject to Phosphoserine. Positions 164–210 constitute a G-patch domain; it reads VEAYGLAMLRGMGWKPGKGIGNTFSQVVKPRVNSIRPKGLGLGANRM. Disordered regions lie at residues 216–241 and 295–367; these read ASVG…PQGL and QEFD…PRNK. The segment covering 224–236 has biased composition (basic and acidic residues); that stretch reads PRPDGDRENDKEG. Positions 231 to 258 constitute a KOW 1 domain; it reads ENDKEGQPQGLMHGRAVVVLSGPYRGLY. Over residues 307 to 331 the composition is skewed to polar residues; it reads VSQTSTEQQNRATGTASSLKAAQNQ. Basic and acidic residues-rich tracts occupy residues 332–341 and 349–363; these read EDSKRRQKGS and PDRQ…EKAA. The KOW 2 domain occupies 401–428; it reads PDTCVCRTDEGRVLEDVREDMLETLIPK. Ser485 carries the post-translational modification Phosphoserine.

This sequence belongs to the MOS2 family. Component of the minor spliceosome, which splices U12-type introns. Interacts with PRKX, PRKACB and DHX16. Post-translationally, phosphorylation regulates its ability to bind RNA.

Its subcellular location is the nucleus. In terms of biological role, RNA-binding protein involved in pre-mRNA splicing. As a component of the minor spliceosome, involved in the splicing of U12-type introns in pre-mRNAs. This is G-patch domain and KOW motifs-containing protein (Gpkow) from Mus musculus (Mouse).